Reading from the N-terminus, the 100-residue chain is Small ribosomal subunit protein bS6 (100 aa).

The protein belongs to the bacterial ribosomal protein bS6 family.

Functionally, binds together with bS18 to 16S ribosomal RNA. This Tropheryma whipplei (strain TW08/27) (Whipple's bacillus) protein is Small ribosomal subunit protein bS6.